A 191-amino-acid polypeptide reads, in one-letter code: Adenylate kinase (191 aa).

An ATP-binding site is contributed by 10–15 (AAGKGT). Residues 30–59 (STGDMLRAAIASGSELGQRVKGVLDRGELV) form an NMP region. Residues threonine 31, arginine 36, 57–59 (ELV), 85–88 (GFPR), and glutamine 92 contribute to the AMP site. An LID region spans residues 126–136 (KRFEEQGRPDD). Residue arginine 127 coordinates ATP. The AMP site is built by arginine 133 and arginine 144. Residue glycine 172 coordinates ATP.

This sequence belongs to the adenylate kinase family. Monomer.

The protein localises to the cytoplasm. The enzyme catalyses AMP + ATP = 2 ADP. It functions in the pathway purine metabolism; AMP biosynthesis via salvage pathway; AMP from ADP: step 1/1. Functionally, catalyzes the reversible transfer of the terminal phosphate group between ATP and AMP. Plays an important role in cellular energy homeostasis and in adenine nucleotide metabolism. This chain is Adenylate kinase, found in Caulobacter vibrioides (strain ATCC 19089 / CIP 103742 / CB 15) (Caulobacter crescentus).